The following is a 497-amino-acid chain: Probable cytosol aminopeptidase (497 aa).

Mn(2+) is bound by residues Lys263 and Asp268. Lys275 is a catalytic residue. Mn(2+) is bound by residues Asp286, Asp345, and Glu347. Arg349 is an active-site residue.

The protein belongs to the peptidase M17 family. It depends on Mn(2+) as a cofactor.

It localises to the cytoplasm. The enzyme catalyses Release of an N-terminal amino acid, Xaa-|-Yaa-, in which Xaa is preferably Leu, but may be other amino acids including Pro although not Arg or Lys, and Yaa may be Pro. Amino acid amides and methyl esters are also readily hydrolyzed, but rates on arylamides are exceedingly low.. It carries out the reaction Release of an N-terminal amino acid, preferentially leucine, but not glutamic or aspartic acids.. Functionally, presumably involved in the processing and regular turnover of intracellular proteins. Catalyzes the removal of unsubstituted N-terminal amino acids from various peptides. The sequence is that of Probable cytosol aminopeptidase from Methylorubrum extorquens (strain CM4 / NCIMB 13688) (Methylobacterium extorquens).